We begin with the raw amino-acid sequence, 334 residues long: Biotin synthase (334 aa).

One can recognise a Radical SAM core domain in the interval 48–275 (NQVQTSQLLS…RSMVRLSAGR (228 aa)). Residues C63, C67, and C70 each coordinate [4Fe-4S] cluster. C107, C138, C198, and R270 together coordinate [2Fe-2S] cluster.

Belongs to the radical SAM superfamily. Biotin synthase family. As to quaternary structure, homodimer. Requires [4Fe-4S] cluster as cofactor. [2Fe-2S] cluster is required as a cofactor.

The enzyme catalyses (4R,5S)-dethiobiotin + (sulfur carrier)-SH + 2 reduced [2Fe-2S]-[ferredoxin] + 2 S-adenosyl-L-methionine = (sulfur carrier)-H + biotin + 2 5'-deoxyadenosine + 2 L-methionine + 2 oxidized [2Fe-2S]-[ferredoxin]. It participates in cofactor biosynthesis; biotin biosynthesis; biotin from 7,8-diaminononanoate: step 2/2. In terms of biological role, catalyzes the conversion of dethiobiotin (DTB) to biotin by the insertion of a sulfur atom into dethiobiotin via a radical-based mechanism. This chain is Biotin synthase, found in Maricaulis maris (strain MCS10) (Caulobacter maris).